The following is a 479-amino-acid chain: RAC-gamma serine/threonine-protein kinase (479 aa).

Ser2 bears the N-acetylserine mark. The PH domain maps to 5-107 (TIVKEDWVQK…WTEAIQAVAD (103 aa)). A disulfide bridge links Cys59 with Cys76. Residues 148–405 (FDYLKLLGKG…PKEIMRHSFF (258 aa)) enclose the Protein kinase domain. ATP contacts are provided by residues 154–162 (LGKGTFGKV) and Lys177. Asp271 functions as the Proton acceptor in the catalytic mechanism. Cys293 and Cys307 are disulfide-bonded. The O-linked (GlcNAc) threonine glycan is linked to Thr302. Phosphothreonine; by PDPK1 is present on Thr305. Thr309 is a glycosylation site (O-linked (GlcNAc) threonine). Positions 406–479 (SGVNWQDVYD…QFSYSASGRE (74 aa)) constitute an AGC-kinase C-terminal domain. The interval 446–479 (ITPPEKDDDDGMDCMDNERRPHFPQFSYSASGRE) is disordered. At Thr447 the chain carries Phosphothreonine. The span at 451–460 (KDDDDGMDCM) shows a compositional bias: acidic residues. A Phosphoserine; by PKC/PRKCZ modification is found at Ser472. Ser472 carries an O-linked (GlcNAc) serine; alternate glycan.

The protein belongs to the protein kinase superfamily. AGC Ser/Thr protein kinase family. RAC subfamily. Interacts (via PH domain) with TCL1A; this enhances AKT3 phosphorylation and activation. Interacts with TRAF6. Interacts with KCTD20. Interacts with BTBD10. Phosphorylation on Thr-305 and Ser-472 is required for full activity. Phosphorylation of the activation loop at Thr-305 by PDPK1/PDK1 is a prerequisite for full activation. Phosphorylation at Ser-472 by mTORC2 in response to growth factors plays a key role in AKT1 activation by facilitating subsequent phosphorylation of the activation loop by PDPK1/PDK1. Post-translationally, ubiquitinated. When fully phosphorylated and translocated into the nucleus, undergoes 'Lys-48'-polyubiquitination catalyzed by TTC3, leading to its degradation by the proteasome. In terms of processing, O-GlcNAcylation at Thr-302 and Thr-309 inhibits activating phosphorylation at Thr-305 via disrupting the interaction between AKT and PDPK1/PDK1.

It is found in the nucleus. It localises to the cytoplasm. The protein localises to the membrane. It catalyses the reaction L-seryl-[protein] + ATP = O-phospho-L-seryl-[protein] + ADP + H(+). The enzyme catalyses L-threonyl-[protein] + ATP = O-phospho-L-threonyl-[protein] + ADP + H(+). With respect to regulation, two specific sites, one in the kinase domain (Thr-305) and the other in the C-terminal regulatory region (Ser-472), need to be phosphorylated for its full activation. IGF-1 leads to the activation of AKT3, which may play a role in regulating cell survival. Its function is as follows. AKT3 is one of 3 closely related serine/threonine-protein kinases (AKT1, AKT2 and AKT3) called the AKT kinase, and which regulate many processes including metabolism, proliferation, cell survival, growth and angiogenesis. This is mediated through serine and/or threonine phosphorylation of a range of downstream substrates. Over 100 substrate candidates have been reported so far, but for most of them, no isoform specificity has been reported. AKT3 is the least studied AKT isoform. It plays an important role in brain development and is crucial for the viability of malignant glioma cells. AKT3 isoform may also be the key molecule in up-regulation and down-regulation of MMP13 via IL13. Required for the coordination of mitochondrial biogenesis with growth factor-induced increases in cellular energy demands. Down-regulation by RNA interference reduces the expression of the phosphorylated form of BAD, resulting in the induction of caspase-dependent apoptosis. The sequence is that of RAC-gamma serine/threonine-protein kinase (Akt3) from Rattus norvegicus (Rat).